The following is a 215-amino-acid chain: MSKVYDWFEERLEIQAIADDITSKYVPPHVNIFYCLGGITLTCFLVQVATGFAMTFYYRPTVTEAFASVQYIMTEVNFGWLIRSVHRWSASMMVLMTILHVFRVYLTGGFKKPRELTWVTGVVLAVLTASFGVTGYSLPWDQIGYWAVKIVTGVPEAIPVIGSPLVELLRGSASVGQSTLTRFYSLHTFVLPLLTAVFMLMHFLMIRKQGISGPL.

Residues 32 to 52 (IFYCLGGITLTCFLVQVATGF) traverse the membrane as a helical segment. Cys-35 provides a ligand contact to heme c. His-86 and His-100 together coordinate heme b. 3 helical membrane-spanning segments follow: residues 90-110 (ASMM…TGGF), 116-136 (LTWV…VTGY), and 186-206 (LHTF…FLMI). His-187 and His-202 together coordinate heme b.

The protein belongs to the cytochrome b family. PetB subfamily. The 4 large subunits of the cytochrome b6-f complex are cytochrome b6, subunit IV (17 kDa polypeptide, PetD), cytochrome f and the Rieske protein, while the 4 small subunits are PetG, PetL, PetM and PetN. The complex functions as a dimer. Heme b serves as cofactor. The cofactor is heme c.

The protein resides in the plastid. Its subcellular location is the chloroplast thylakoid membrane. Its function is as follows. Component of the cytochrome b6-f complex, which mediates electron transfer between photosystem II (PSII) and photosystem I (PSI), cyclic electron flow around PSI, and state transitions. The sequence is that of Cytochrome b6 from Citrus sinensis (Sweet orange).